Reading from the N-terminus, the 201-residue chain is Recombination protein RecR (201 aa).

The C4-type zinc-finger motif lies at 58 to 73 (CGRCGALTDVDPCGIC). Residues 81 to 178 (ETLCLVSEWD…RVTRLAQGIP (98 aa)) enclose the Toprim domain.

Belongs to the RecR family.

In terms of biological role, may play a role in DNA repair. It seems to be involved in an RecBC-independent recombinational process of DNA repair. It may act with RecF and RecO. The protein is Recombination protein RecR of Nitratidesulfovibrio vulgaris (strain DSM 19637 / Miyazaki F) (Desulfovibrio vulgaris).